The following is an 89-amino-acid chain: Small ribosomal subunit protein uS15 (89 aa).

This sequence belongs to the universal ribosomal protein uS15 family. Part of the 30S ribosomal subunit. Forms a bridge to the 50S subunit in the 70S ribosome, contacting the 23S rRNA.

In terms of biological role, one of the primary rRNA binding proteins, it binds directly to 16S rRNA where it helps nucleate assembly of the platform of the 30S subunit by binding and bridging several RNA helices of the 16S rRNA. Functionally, forms an intersubunit bridge (bridge B4) with the 23S rRNA of the 50S subunit in the ribosome. The chain is Small ribosomal subunit protein uS15 from Acinetobacter baumannii (strain AB307-0294).